Here is a 538-residue protein sequence, read N- to C-terminus: Chaperonin GroEL 1 (538 aa).

Residues 29-32 (TLGP), 86-90 (DGTTT), Gly413, 478-480 (NAA), and Asp494 contribute to the ATP site.

The protein belongs to the chaperonin (HSP60) family. Forms a cylinder of 14 subunits composed of two heptameric rings stacked back-to-back. Interacts with the co-chaperonin GroES.

It is found in the cytoplasm. The catalysed reaction is ATP + H2O + a folded polypeptide = ADP + phosphate + an unfolded polypeptide.. Functionally, together with its co-chaperonin GroES, plays an essential role in assisting protein folding. The GroEL-GroES system forms a nano-cage that allows encapsulation of the non-native substrate proteins and provides a physical environment optimized to promote and accelerate protein folding. The protein is Chaperonin GroEL 1 of Corynebacterium glutamicum (strain R).